The sequence spans 591 residues: L-fucose isomerase (591 aa).

Catalysis depends on proton acceptor residues glutamate 337 and aspartate 361. Residues glutamate 337, aspartate 361, and histidine 528 each contribute to the Mn(2+) site.

The protein belongs to the L-fucose isomerase family. As to quaternary structure, homohexamer. Mn(2+) serves as cofactor.

Its subcellular location is the cytoplasm. It carries out the reaction L-fucose = L-fuculose. Its pathway is carbohydrate degradation; L-fucose degradation; L-lactaldehyde and glycerone phosphate from L-fucose: step 1/3. Functionally, converts the aldose L-fucose into the corresponding ketose L-fuculose. The sequence is that of L-fucose isomerase from Salmonella typhi.